The following is a 316-amino-acid chain: 4-hydroxy-3-methylbut-2-enyl diphosphate reductase (316 aa).

[4Fe-4S] cluster is bound at residue Cys-12. (2E)-4-hydroxy-3-methylbut-2-enyl diphosphate contacts are provided by His-41 and His-74. Dimethylallyl diphosphate is bound by residues His-41 and His-74. Isopentenyl diphosphate contacts are provided by His-41 and His-74. Position 96 (Cys-96) interacts with [4Fe-4S] cluster. His-124 contacts (2E)-4-hydroxy-3-methylbut-2-enyl diphosphate. His-124 is a dimethylallyl diphosphate binding site. An isopentenyl diphosphate-binding site is contributed by His-124. Residue Glu-126 is the Proton donor of the active site. Thr-167 provides a ligand contact to (2E)-4-hydroxy-3-methylbut-2-enyl diphosphate. Cys-197 contacts [4Fe-4S] cluster. Residues Ser-225, Ser-226, Asn-227, and Ser-269 each coordinate (2E)-4-hydroxy-3-methylbut-2-enyl diphosphate. Residues Ser-225, Ser-226, Asn-227, and Ser-269 each contribute to the dimethylallyl diphosphate site. Isopentenyl diphosphate-binding residues include Ser-225, Ser-226, Asn-227, and Ser-269.

The protein belongs to the IspH family. As to quaternary structure, homodimer. [4Fe-4S] cluster serves as cofactor.

The enzyme catalyses isopentenyl diphosphate + 2 oxidized [2Fe-2S]-[ferredoxin] + H2O = (2E)-4-hydroxy-3-methylbut-2-enyl diphosphate + 2 reduced [2Fe-2S]-[ferredoxin] + 2 H(+). The catalysed reaction is dimethylallyl diphosphate + 2 oxidized [2Fe-2S]-[ferredoxin] + H2O = (2E)-4-hydroxy-3-methylbut-2-enyl diphosphate + 2 reduced [2Fe-2S]-[ferredoxin] + 2 H(+). The protein operates within isoprenoid biosynthesis; dimethylallyl diphosphate biosynthesis; dimethylallyl diphosphate from (2E)-4-hydroxy-3-methylbutenyl diphosphate: step 1/1. It functions in the pathway isoprenoid biosynthesis; isopentenyl diphosphate biosynthesis via DXP pathway; isopentenyl diphosphate from 1-deoxy-D-xylulose 5-phosphate: step 6/6. In terms of biological role, catalyzes the conversion of 1-hydroxy-2-methyl-2-(E)-butenyl 4-diphosphate (HMBPP) into a mixture of isopentenyl diphosphate (IPP) and dimethylallyl diphosphate (DMAPP). Acts in the terminal step of the DOXP/MEP pathway for isoprenoid precursor biosynthesis. This chain is 4-hydroxy-3-methylbut-2-enyl diphosphate reductase, found in Pectobacterium atrosepticum (strain SCRI 1043 / ATCC BAA-672) (Erwinia carotovora subsp. atroseptica).